The primary structure comprises 87 residues: Small ribosomal subunit protein bS20 (87 aa).

It belongs to the bacterial ribosomal protein bS20 family.

Binds directly to 16S ribosomal RNA. This chain is Small ribosomal subunit protein bS20, found in Alkaliphilus metalliredigens (strain QYMF).